A 1496-amino-acid chain; its full sequence is DNA-directed RNA polymerase subunit beta' (1496 aa).

4 residues coordinate Zn(2+): cysteine 67, cysteine 69, cysteine 82, and cysteine 85. Residues aspartate 499, aspartate 501, and aspartate 503 each coordinate Mg(2+). Residues cysteine 867, cysteine 943, cysteine 950, and cysteine 953 each coordinate Zn(2+).

The protein belongs to the RNA polymerase beta' chain family. As to quaternary structure, the RNAP catalytic core consists of 2 alpha, 1 beta, 1 beta' and 1 omega subunit. When a sigma factor is associated with the core the holoenzyme is formed, which can initiate transcription. Mg(2+) serves as cofactor. Zn(2+) is required as a cofactor.

The catalysed reaction is RNA(n) + a ribonucleoside 5'-triphosphate = RNA(n+1) + diphosphate. Functionally, DNA-dependent RNA polymerase catalyzes the transcription of DNA into RNA using the four ribonucleoside triphosphates as substrates. This Chlorobium limicola (strain DSM 245 / NBRC 103803 / 6330) protein is DNA-directed RNA polymerase subunit beta'.